The primary structure comprises 433 residues: 3-phosphoshikimate 1-carboxyvinyltransferase (433 aa).

Residues Lys22, Ser23, and Arg27 each coordinate 3-phosphoshikimate. Lys22 serves as a coordination point for phosphoenolpyruvate. Residues Gly95 and Arg123 each coordinate phosphoenolpyruvate. Positions 167, 169, 315, and 342 each coordinate 3-phosphoshikimate. Gln169 lines the phosphoenolpyruvate pocket. Asp315 serves as the catalytic Proton acceptor. 2 residues coordinate phosphoenolpyruvate: Arg346 and Arg387.

It belongs to the EPSP synthase family. As to quaternary structure, monomer.

Its subcellular location is the cytoplasm. It carries out the reaction 3-phosphoshikimate + phosphoenolpyruvate = 5-O-(1-carboxyvinyl)-3-phosphoshikimate + phosphate. It functions in the pathway metabolic intermediate biosynthesis; chorismate biosynthesis; chorismate from D-erythrose 4-phosphate and phosphoenolpyruvate: step 6/7. In terms of biological role, catalyzes the transfer of the enolpyruvyl moiety of phosphoenolpyruvate (PEP) to the 5-hydroxyl of shikimate-3-phosphate (S3P) to produce enolpyruvyl shikimate-3-phosphate and inorganic phosphate. This is 3-phosphoshikimate 1-carboxyvinyltransferase from Legionella pneumophila (strain Lens).